The sequence spans 125 residues: Small ribosomal subunit protein uS12 (125 aa).

The segment at 1 to 28 (MPTISQLIGSERKRLTRKTKSPALKSCP) is disordered. 3-methylthioaspartic acid is present on Asp89. Residues 104–125 (TAGVKDRRQSRSKYGAKAPKNN) are disordered.

It belongs to the universal ribosomal protein uS12 family. In terms of assembly, part of the 30S ribosomal subunit. Contacts proteins S8 and S17. May interact with IF1 in the 30S initiation complex.

With S4 and S5 plays an important role in translational accuracy. In terms of biological role, interacts with and stabilizes bases of the 16S rRNA that are involved in tRNA selection in the A site and with the mRNA backbone. Located at the interface of the 30S and 50S subunits, it traverses the body of the 30S subunit contacting proteins on the other side and probably holding the rRNA structure together. The combined cluster of proteins S8, S12 and S17 appears to hold together the shoulder and platform of the 30S subunit. The polypeptide is Small ribosomal subunit protein uS12 (Prochlorococcus marinus (strain MIT 9515)).